Reading from the N-terminus, the 78-residue chain is MNVSHNSSIDHNDLAKRGESLIRKSTNRYLTTVRIAFRAKQRRFDDFDGLLEESSIKPVQRSIIELSDEQDQPDLLPG.

Belongs to the RNA polymerase subunit omega family. As to quaternary structure, in cyanobacteria the RNAP catalytic core is composed of 2 alpha, 1 beta, 1 beta', 1 gamma and 1 omega subunit. When a sigma factor is associated with the core the holoenzyme is formed, which can initiate transcription.

It catalyses the reaction RNA(n) + a ribonucleoside 5'-triphosphate = RNA(n+1) + diphosphate. Functionally, promotes RNA polymerase assembly. Latches the N- and C-terminal regions of the beta' subunit thereby facilitating its interaction with the beta and alpha subunits. The chain is DNA-directed RNA polymerase subunit omega from Prochlorococcus marinus (strain MIT 9515).